A 55-amino-acid polypeptide reads, in one-letter code: Accessory gland-specific peptide 70A (55 aa).

A signal peptide spans 1–19; sequence MKTLALFLVLVCVLGLVQS. Positions 20–33 are essential for binding to sperm; the sequence is WEWPWNRKPTKFPI. 2 positions are modified to hydroxyproline: Pro28 and Pro32. Ile33 is subject to Isoleucine derivative. 3 positions are modified to hydroxyproline: Pro34, Pro36, and Pro38. Residues 36-55 form a sufficient to induce PMR region; it reads PNPRDKWCRLNLGPAWGGRC. A disulfide bond links Cys43 and Cys55.

Belongs to the Drosophila sex peptide family. Post-translationally, sperm-bound protein is cleaved to release an active C-terminal peptide. Gradual release from stored sperm may function to prolong PMR and enhance male reproductive success. As to expression, main cells of the accessory glands of males (paragonial gland).

It localises to the secreted. Its function is as follows. Male seminal protein which triggers short- and long-term post-mating behavioral responses (PMR) in female Drosophila. Binds initially to sperm where it is later cleaved to release an active peptide within the female reproductive tract. Signals via the sex peptide receptor (SPR) in female flies; may also act via other receptors. Moderates the activity of distinct neuronal circuitries in the female genital tract to promote specific PMRs including: enhanced ovulation, increased egg laying rate, increased feeding/foraging rate, induced antimicrobial peptide synthesis, reduced mating receptivity, reduced day-time sleep and reduced lifespan in multiple mated females. The sequence is that of Accessory gland-specific peptide 70A (SP) from Drosophila melanogaster (Fruit fly).